Consider the following 275-residue polypeptide: Polyamine aminopropyltransferase 1 (275 aa).

Residues 2 to 235 (ELWFTEKQTK…GLWTFTIGSK (234 aa)) enclose the PABS domain. Q31 contributes to the S-methyl-5'-thioadenosine binding site. The spermidine site is built by H62 and D86. Residues E106 and 137–138 (DG) each bind S-methyl-5'-thioadenosine. Catalysis depends on D155, which acts as the Proton acceptor. 155–158 (DSTE) serves as a coordination point for spermidine. P162 is an S-methyl-5'-thioadenosine binding site.

The protein belongs to the spermidine/spermine synthase family. In terms of assembly, homodimer or homotetramer.

Its subcellular location is the cytoplasm. The enzyme catalyses S-adenosyl 3-(methylsulfanyl)propylamine + putrescine = S-methyl-5'-thioadenosine + spermidine + H(+). The protein operates within amine and polyamine biosynthesis; spermidine biosynthesis; spermidine from putrescine: step 1/1. Catalyzes the irreversible transfer of a propylamine group from the amino donor S-adenosylmethioninamine (decarboxy-AdoMet) to putrescine (1,4-diaminobutane) to yield spermidine. This is Polyamine aminopropyltransferase 1 from Bacillus cereus (strain ATCC 14579 / DSM 31 / CCUG 7414 / JCM 2152 / NBRC 15305 / NCIMB 9373 / NCTC 2599 / NRRL B-3711).